The following is a 513-amino-acid chain: Bifunctional purine biosynthesis protein PurH (513 aa).

The MGS-like domain maps to 1–145; sequence MTKKAIISVY…KNFKYITVII (145 aa).

Belongs to the PurH family.

It catalyses the reaction (6R)-10-formyltetrahydrofolate + 5-amino-1-(5-phospho-beta-D-ribosyl)imidazole-4-carboxamide = 5-formamido-1-(5-phospho-D-ribosyl)imidazole-4-carboxamide + (6S)-5,6,7,8-tetrahydrofolate. The catalysed reaction is IMP + H2O = 5-formamido-1-(5-phospho-D-ribosyl)imidazole-4-carboxamide. It participates in purine metabolism; IMP biosynthesis via de novo pathway; 5-formamido-1-(5-phospho-D-ribosyl)imidazole-4-carboxamide from 5-amino-1-(5-phospho-D-ribosyl)imidazole-4-carboxamide (10-formyl THF route): step 1/1. Its pathway is purine metabolism; IMP biosynthesis via de novo pathway; IMP from 5-formamido-1-(5-phospho-D-ribosyl)imidazole-4-carboxamide: step 1/1. This is Bifunctional purine biosynthesis protein PurH from Caldicellulosiruptor saccharolyticus (strain ATCC 43494 / DSM 8903 / Tp8T 6331).